The primary structure comprises 222 residues: Apoptosis regulator OPG045 (222 aa).

This sequence belongs to the orthopoxvirus OPG045 family. In terms of assembly, homodimer. Interacts with host pro-apoptotic protein BCL2L11 (via BH3 domain). Interacts with host NLRP1. Interacts with host BAK.

The protein localises to the host mitochondrion outer membrane. It is found in the host cytoplasm. Plays a role in evading host innate immune response by inhibiting host inflammasome activation. Interacts with and inhibits NLR-mediated interleukin-1 beta/IL1B production in infected cells. At the host mitochondria outer membrane, interacts with the BH3 domain of host BAK and prevents BAK from binding active BAX. In turn, host apoptosis is inhibited. The sequence is that of Apoptosis regulator OPG045 (OPG045) from Homo sapiens (Human).